We begin with the raw amino-acid sequence, 48 residues long: Large ribosomal subunit protein uL14 (48 aa).

This sequence belongs to the universal ribosomal protein uL14 family.

The protein is Large ribosomal subunit protein uL14 (RPL23) of Onchocerca volvulus.